The primary structure comprises 428 residues: Histidine--tRNA ligase (428 aa).

This sequence belongs to the class-II aminoacyl-tRNA synthetase family. Homodimer.

It localises to the cytoplasm. The enzyme catalyses tRNA(His) + L-histidine + ATP = L-histidyl-tRNA(His) + AMP + diphosphate + H(+). This Pseudomonas entomophila (strain L48) protein is Histidine--tRNA ligase.